Reading from the N-terminus, the 638-residue chain is Cytoplasmic dynein 1 intermediate chain 2 (638 aa).

Composition is skewed to basic and acidic residues over residues 1–13 and 20–43; these read MSDKSELKAELER and QIREEKKRKEEERKKKETDQKKEA. Disordered stretches follow at residues 1 to 135 and 155 to 214; these read MSDK…GRGP and TYTK…EEKQ. N-acetylserine is present on serine 2. Diphosphoserine is present on serine 51. 5 positions are modified to phosphoserine: serine 51, serine 73, tryptophan 81, proline 84, and serine 90. Residues 88 to 97 are compositionally biased toward low complexity; the sequence is PSSKSVSTPS. Position 95 is a phosphothreonine (threonine 95). Residues serine 97, serine 101, and serine 104 each carry the phosphoserine modification. A compositionally biased stretch (basic and acidic residues) spans 190–214; that stretch reads EKTLKKDEENDSKAPPHELTEEEKQ. WD repeat units follow at residues 277-326, 330-370, 379-420, 429-469, 474-519, 522-562, and 568-607; these read SKHR…TTPE, HCQS…RTPV, AHTH…HPQD, SKAV…AGIS, GHQG…PLYS, DNAD…EVPT, and EGNPALNRVRWTHSGREIAVGDSEGQIVIYDVGEQIAVPR.

It belongs to the dynein intermediate chain family. In terms of assembly, homodimer. The cytoplasmic dynein 1 complex consists of two catalytic heavy chains (HCs) and a number of non-catalytic subunits presented by intermediate chains (ICs), light intermediate chains (LICs) and light chains (LCs); the composition seems to vary in respect to the IC, LIC and LC composition. The heavy chain homodimer serves as a scaffold for the probable homodimeric assembly of the respective non-catalytic subunits. The ICs and LICs bind directly to the HC dimer and the LCs assemble on the IC dimer. Interacts with DYNLT3. Interacts with DYNLT1. Interacts (dephosphorylated at Ser-90) with DCTN1. Interacts with BICD2. Interacts with SPEF2. Interacts with CFAP61. (Microbial infection) Interacts with human adenovirus 5 hexon protein; this interaction probably allows virus intracellular transport. The phosphorylation status of Ser-90 appears to be involved in dynactin-dependent target binding. Post-translationally, pyrophosphorylation by 5-diphosphoinositol pentakisphosphate (5-IP7) promotes interaction with DCTN1. Serine pyrophosphorylation is achieved by Mg(2+)-dependent, but enzyme independent transfer of a beta-phosphate from a inositol pyrophosphate to a pre-phosphorylated serine residue.

It is found in the cytoplasm. Its subcellular location is the cytoskeleton. Its function is as follows. Acts as one of several non-catalytic accessory components of the cytoplasmic dynein 1 complex that are thought to be involved in linking dynein to cargos and to adapter proteins that regulate dynein function. Cytoplasmic dynein 1 acts as a motor for the intracellular retrograde motility of vesicles and organelles along microtubules. The intermediate chains mediate the binding of dynein to dynactin via its 150 kDa component (p150-glued) DCTN1. Involved in membrane-transport, such as Golgi apparatus, late endosomes and lysosomes. The chain is Cytoplasmic dynein 1 intermediate chain 2 from Homo sapiens (Human).